A 618-amino-acid chain; its full sequence is Zinc finger protein 48 (618 aa).

M1 is subject to N-acetylmethionine. 2 stretches are compositionally biased toward basic and acidic residues: residues M1–R22 and E39–F51. 2 disordered regions span residues M1–F51 and L78–D109. A Glycyl lysine isopeptide (Lys-Gly) (interchain with G-Cter in SUMO2) cross-link involves residue K87. 2 C2H2-type zinc fingers span residues A112–H134 and Y140–H162. Positions K157–E189 are disordered. K179 is covalently cross-linked (Glycyl lysine isopeptide (Lys-Gly) (interchain with G-Cter in SUMO2)). C2H2-type zinc fingers lie at residues T192–H214 and Y220–H242. Positions R235–Q271 are disordered. K269 participates in a covalent cross-link: Glycyl lysine isopeptide (Lys-Gly) (interchain with G-Cter in SUMO2). 2 consecutive C2H2-type zinc fingers follow at residues Y275–H297 and F303–H325. A Glycyl lysine isopeptide (Lys-Gly) (interchain with G-Cter in SUMO2) cross-link involves residue K329. 2 C2H2-type zinc fingers span residues Y331–H353 and H359–H381. The segment covering Y392 to P414 has biased composition (pro residues). The tract at residues Y392–G457 is disordered. Low complexity predominate over residues R415–E432. The C2H2-type 9 zinc finger occupies H451–H473. A Glycyl lysine isopeptide (Lys-Gly) (interchain with G-Cter in SUMO2) cross-link involves residue K477. The C2H2-type 10 zinc finger occupies Y479–H501. The segment at T500 to S540 is disordered. The span at P508 to P528 shows a compositional bias: pro residues. C2H2-type zinc fingers lie at residues H543–H565 and Y571–H593. K610 participates in a covalent cross-link: Glycyl lysine isopeptide (Lys-Gly) (interchain with G-Cter in SUMO2).

The protein belongs to the krueppel C2H2-type zinc-finger protein family.

The protein resides in the nucleus. Its function is as follows. May be involved in transcriptional regulation. The chain is Zinc finger protein 48 (ZNF48) from Homo sapiens (Human).